A 252-amino-acid chain; its full sequence is Triosephosphate isomerase (252 aa).

9–11 serves as a coordination point for substrate; it reads NWK. His-96 acts as the Electrophile in catalysis. Glu-168 serves as the catalytic Proton acceptor. Residues Gly-174, Ser-214, and 235–236 each bind substrate; that span reads GG.

This sequence belongs to the triosephosphate isomerase family. As to quaternary structure, homodimer.

The protein localises to the cytoplasm. The catalysed reaction is D-glyceraldehyde 3-phosphate = dihydroxyacetone phosphate. Its pathway is carbohydrate biosynthesis; gluconeogenesis. It functions in the pathway carbohydrate degradation; glycolysis; D-glyceraldehyde 3-phosphate from glycerone phosphate: step 1/1. Its function is as follows. Involved in the gluconeogenesis. Catalyzes stereospecifically the conversion of dihydroxyacetone phosphate (DHAP) to D-glyceraldehyde-3-phosphate (G3P). This chain is Triosephosphate isomerase, found in Chloroherpeton thalassium (strain ATCC 35110 / GB-78).